Consider the following 206-residue polypeptide: Probable GTP-binding protein EngB (206 aa).

An EngB-type G domain is found at 7–195 (DCDEVVLLGR…EEALQAIFSD (189 aa)). GTP-binding positions include 15-22 (GRSNVGKS), 41-45 (GVTRS), 60-63 (DLPG), 140-143 (NKID), and 175-177 (ISA). Residues S22 and T43 each coordinate Mg(2+).

The protein belongs to the TRAFAC class TrmE-Era-EngA-EngB-Septin-like GTPase superfamily. EngB GTPase family. The cofactor is Mg(2+).

Functionally, necessary for normal cell division and for the maintenance of normal septation. The protein is Probable GTP-binding protein EngB of Haloquadratum walsbyi (strain DSM 16790 / HBSQ001).